Reading from the N-terminus, the 241-residue chain is tRNA (guanine-N(1)-)-methyltransferase (241 aa).

S-adenosyl-L-methionine is bound by residues glycine 108 and 127–132; that span reads LGDYVL.

This sequence belongs to the RNA methyltransferase TrmD family. As to quaternary structure, homodimer.

The protein localises to the cytoplasm. The enzyme catalyses guanosine(37) in tRNA + S-adenosyl-L-methionine = N(1)-methylguanosine(37) in tRNA + S-adenosyl-L-homocysteine + H(+). In terms of biological role, specifically methylates guanosine-37 in various tRNAs. This chain is tRNA (guanine-N(1)-)-methyltransferase, found in Streptococcus suis (strain 98HAH33).